The sequence spans 126 residues: Cornifin alpha (126 aa).

The residue at position 2 (Ser-2) is an N-acetylserine. 13 consecutive repeat copies span residues 3 to 14 (SQQQKQPCTLPP), 18 to 29 (QHQVKQPCQPPP), 31 to 38 (EPCVPKTK), 39 to 46 (EPCQPKVP), 47 to 54 (EPCQPKVP), 55 to 62 (EPCQPKVP), 63 to 70 (EPCQPKVP), 71 to 78 (QPCQPKVP), 79 to 86 (EPCQPKVP), 87 to 94 (EPCQPKVP), 95 to 102 (EPCQPKVP), 103 to 110 (EPCQSKVP), and 111 to 118 (QPCQPKVP). Positions 3 to 29 (SQQQKQPCTLPPQLQQHQVKQPCQPPP) are 2 X 12 AA approximate repeats. The tract at residues 20–43 (QVKQPCQPPPQEPCVPKTKEPCQP) is disordered. The tract at residues 31 to 122 (EPCVPKTKEP…CQPKVPEPCQ (92 aa)) is 11 X 8 AA approximate tandem repeats. The interval 104–126 (PCQSKVPQPCQPKVPEPCQTKQK) is disordered.

It belongs to the cornifin (SPRR) family. In terms of tissue distribution, suprabasal layers of squamous-differentiated tissues such as epidermis, esophagus, tongue and trachea.

It is found in the cytoplasm. In terms of biological role, cross-linked envelope protein of keratinocytes. It is a keratinocyte protein that first appears in the cell cytosol, but ultimately becomes cross-linked to membrane proteins by transglutaminase. All that results in the formation of an insoluble envelope beneath the plasma membrane. This is Cornifin alpha from Oryctolagus cuniculus (Rabbit).